We begin with the raw amino-acid sequence, 511 residues long: AMP phosphorylase (511 aa).

AMP contacts are provided by residues glycine 168, 194–199, and threonine 203; that span reads SRAITS. Aspartate 256 acts as the Proton donor in catalysis. AMP contacts are provided by serine 262 and lysine 286.

The protein belongs to the thymidine/pyrimidine-nucleoside phosphorylase family. Type 2 subfamily.

It catalyses the reaction AMP + phosphate = alpha-D-ribose 1,5-bisphosphate + adenine. It carries out the reaction CMP + phosphate = cytosine + alpha-D-ribose 1,5-bisphosphate. The enzyme catalyses UMP + phosphate = alpha-D-ribose 1,5-bisphosphate + uracil. Its function is as follows. Catalyzes the conversion of AMP and phosphate to adenine and ribose 1,5-bisphosphate (R15P). Exhibits phosphorylase activity toward CMP and UMP in addition to AMP. Functions in an archaeal AMP degradation pathway, together with R15P isomerase and RubisCO. In Thermofilum pendens (strain DSM 2475 / Hrk 5), this protein is AMP phosphorylase.